The sequence spans 314 residues: DNA-directed RNA polymerase subunit alpha (314 aa).

The segment at 1-228 (MIEIEKPKIE…EHLNIFVGLT (228 aa)) is alpha N-terminal domain (alpha-NTD). An alpha C-terminal domain (alpha-CTD) region spans residues 245–314 (KEKVLEMTIE…ELGLGLRKDD (70 aa)).

This sequence belongs to the RNA polymerase alpha chain family. Homodimer. The RNAP catalytic core consists of 2 alpha, 1 beta, 1 beta' and 1 omega subunit. When a sigma factor is associated with the core the holoenzyme is formed, which can initiate transcription.

It carries out the reaction RNA(n) + a ribonucleoside 5'-triphosphate = RNA(n+1) + diphosphate. In terms of biological role, DNA-dependent RNA polymerase catalyzes the transcription of DNA into RNA using the four ribonucleoside triphosphates as substrates. The chain is DNA-directed RNA polymerase subunit alpha from Bacillus licheniformis (strain ATCC 14580 / DSM 13 / JCM 2505 / CCUG 7422 / NBRC 12200 / NCIMB 9375 / NCTC 10341 / NRRL NRS-1264 / Gibson 46).